The following is a 244-amino-acid chain: Carboxy-S-adenosyl-L-methionine synthase (244 aa).

Residues Tyr41, 66–68, 91–92, Asn134, and Arg201 contribute to the S-adenosyl-L-methionine site; these read GCS and DN.

This sequence belongs to the class I-like SAM-binding methyltransferase superfamily. Cx-SAM synthase family. In terms of assembly, homodimer.

The enzyme catalyses prephenate + S-adenosyl-L-methionine = carboxy-S-adenosyl-L-methionine + 3-phenylpyruvate + H2O. Its function is as follows. Catalyzes the conversion of S-adenosyl-L-methionine (SAM) to carboxy-S-adenosyl-L-methionine (Cx-SAM). This chain is Carboxy-S-adenosyl-L-methionine synthase, found in Colwellia psychrerythraea (strain 34H / ATCC BAA-681) (Vibrio psychroerythus).